Here is a 601-residue protein sequence, read N- to C-terminus: Kelch repeat and BTB domain-containing protein 8 (601 aa).

A disordered region spans residues 1–25 (MAASADLSKSSPTPNGIPSSDPASD). A compositionally biased stretch (polar residues) spans 7 to 22 (LSKSSPTPNGIPSSDP). The region spanning 49–117 (TDIVVEVDHG…AYTSRVILTE (69 aa)) is the BTB domain. One can recognise a BACK domain in the interval 153–252 (IGVFIFADHY…PLMEDTFIEK (100 aa)). Kelch repeat units lie at residues 336-390 (DIYI…YCCG), 391-441 (KMYA…EYKE), 443-481 (IYVLQGEFFLFYEPQKDYWGFLTPMTVPRIQGLAAVYKD), 483-532 (IYYI…LFQN), and 542-588 (QVTV…FECA).

It belongs to the KBTBD8 family. In terms of assembly, component of the BCR(KBTBD8) E3 ubiquitin ligase complex, at least composed of CUL3, KBTBD8 and RBX1.

The protein resides in the cytoplasm. It localises to the cytoskeleton. It is found in the spindle. Its subcellular location is the golgi apparatus. In terms of biological role, substrate-specific adapter of a BCR (BTB-CUL3-RBX1) E3 ubiquitin ligase complex that acts as a regulator of neural crest specification. The BCR(KBTBD8) complex acts by mediating monoubiquitination of NOLC1 and TCOF1: monoubiquitination promotes the formation of a NOLC1-TCOF1 complex that acts as a platform to connect RNA polymerase I with enzymes responsible for ribosomal processing and modification, leading to remodel the translational program of differentiating cells in favor of neural crest specification. The chain is Kelch repeat and BTB domain-containing protein 8 (KBTBD8) from Homo sapiens (Human).